Here is a 292-residue protein sequence, read N- to C-terminus: Glycine--tRNA ligase alpha subunit (292 aa).

Belongs to the class-II aminoacyl-tRNA synthetase family. In terms of assembly, tetramer of two alpha and two beta subunits.

The protein resides in the cytoplasm. It catalyses the reaction tRNA(Gly) + glycine + ATP = glycyl-tRNA(Gly) + AMP + diphosphate. The polypeptide is Glycine--tRNA ligase alpha subunit (Geobacter sulfurreducens (strain ATCC 51573 / DSM 12127 / PCA)).